The sequence spans 392 residues: Nicotinate phosphoribosyltransferase (392 aa).

Phosphohistidine; by autocatalysis is present on His216.

Belongs to the NAPRTase family. Post-translationally, transiently phosphorylated on a His residue during the reaction cycle. Phosphorylation strongly increases the affinity for substrates and increases the rate of nicotinate D-ribonucleotide production. Dephosphorylation regenerates the low-affinity form of the enzyme, leading to product release.

It carries out the reaction nicotinate + 5-phospho-alpha-D-ribose 1-diphosphate + ATP + H2O = nicotinate beta-D-ribonucleotide + ADP + phosphate + diphosphate. Its pathway is cofactor biosynthesis; NAD(+) biosynthesis; nicotinate D-ribonucleotide from nicotinate: step 1/1. In terms of biological role, catalyzes the synthesis of beta-nicotinate D-ribonucleotide from nicotinate and 5-phospho-D-ribose 1-phosphate at the expense of ATP. In Cupriavidus necator (strain ATCC 17699 / DSM 428 / KCTC 22496 / NCIMB 10442 / H16 / Stanier 337) (Ralstonia eutropha), this protein is Nicotinate phosphoribosyltransferase.